Here is a 455-residue protein sequence, read N- to C-terminus: Venom prothrombin activator trocarin-D (455 aa).

The first 20 residues, 1–20, serve as a signal peptide directing secretion; it reads MAPQLLLCLILTFLWSLPEA. Positions 21 to 40 are excised as a propeptide; the sequence is ESNVFLKSKVANRFLQRTKR. One can recognise a Gla domain in the interval 41–86; the sequence is SNSLFEEIRPGNIERECIEEKCSKEEAREVFEDNEKTETFWNVYVD. 11 positions are modified to 4-carboxyglutamate: Glu46, Glu47, Glu54, Glu56, Glu59, Glu60, Glu65, Glu66, Glu69, Glu72, and Glu75. Cys57 and Cys62 are joined by a disulfide. An EGF-like 1; calcium-binding domain is found at 86–122; sequence DGDQCSSNPCHYRGTCKDGIGSYTCTCLPNYEGKNCE. 11 cysteine pairs are disulfide-bonded: Cys90/Cys101, Cys95/Cys110, Cys112/Cys121, Cys129/Cys140, Cys136/Cys149, Cys151/Cys164, Cys172/Cys328, Cys216/Cys221, Cys236/Cys252, Cys376/Cys390, and Cys401/Cys429. Ser92 carries an O-linked (Hex...) serine glycan. The EGF-like 2 domain maps to 129–164; that stretch reads CRVDNGNCWHFCKRVQSETQCSCAESYRLGVDGHSC. Residues 182 to 209 constitute a propeptide, activation peptide; it reads REASLPDFVQSQKATLLKKSDNPSPDIR. The Peptidase S1 domain maps to 210-453; it reads IVNGMDCKLG…FIPWIKKIMS (244 aa). Catalysis depends on His251, which acts as the Charge relay system. An N-linked (GlcNAc...) asparagine glycan is attached at Asn254. The active-site Charge relay system is the Asp308. Catalysis depends on Ser405, which acts as the Charge relay system.

The protein belongs to the peptidase S1 family. Snake venom subfamily. In terms of assembly, heterodimer of a light chain and a heavy chain; disulfide-linked. Gamma-carboxyglutamate residues are formed by vitamin K dependent carboxylation. These residues are essential for the binding of calcium. Post-translationally, the O-linked saccharides at Ser-92 are a mixture of Xyl-Glc, and Glc along with smaller amounts of Xyl-GlcNAc, GlcNAc, Gal, GalNAc, Xyl-Gal, and Xyl-GalNAc, suggesting that the glycosyl transferases responsible for this modification are non-specific. The N-linked carbohydrate at Asn-254 (Asn-45 of the heavy chain) is a sialylated and diantennary oligosaccharide. Expressed by the venom gland.

It localises to the secreted. It carries out the reaction Selective cleavage of Arg-|-Thr and then Arg-|-Ile bonds in prothrombin to form thrombin.. Its activity is regulated as follows. Activated by calcium and phospholipids. Snake prothrombin activator that attacks the hemostatic system of prey. This protein is functionally similar to blood coagulation factor Xa. Induces cyanosis and death in mice at 1 mg/kg body weight during blood clotting. This is Venom prothrombin activator trocarin-D from Tropidechis carinatus (Australian rough-scaled snake).